The chain runs to 331 residues: Geranylgeranyl transferase type-2 subunit beta (331 aa).

N-acetylglycine is present on Gly2. Thr3 carries the phosphothreonine modification. 6 PFTB repeats span residues 20–61, 68–109, 116–157, 164–205, 212–253, and 260–302; these read LEKH…DLMG, REEI…TLYD, INKV…ALLG, VEKA…AITS, SDLL…KIIG, and REKL…SLLG. 190-192 serves as a coordination point for geranylgeranyl diphosphate; that stretch reads HAG. Asp238 and Cys240 together coordinate Zn(2+). A geranylgeranyl diphosphate-binding site is contributed by 241–244; that stretch reads YSWW. His290 lines the Zn(2+) pocket.

The protein belongs to the protein prenyltransferase subunit beta family. Heterotrimer composed of RABGGTA, RABGGTB and CHM; within this trimer, RABGGTA and RABGGTB form the catalytic component B, while CHM (component A) mediates peptide substrate binding. The Rab GGTase dimer (RGGT) interacts with CHM (component A) prior to Rab protein binding; the association is stabilized by geranylgeranyl pyrophosphate (GGpp). The CHM:RGGT:Rab complex is destabilized by GGpp. Interaction of RABGGTB with prenylated PTP4A2 precludes its association with RABGGTA and inhibits enzyme activity. Interacts with CHODL. Interacts with non-phosphorylated form of RAB8A; phosphorylation of RAB8A at 'Thr-72' disrupts this interaction. It depends on Zn(2+) as a cofactor.

It carries out the reaction geranylgeranyl diphosphate + L-cysteinyl-[protein] = S-geranylgeranyl-L-cysteinyl-[protein] + diphosphate. The enzymatic reaction requires the aid of a Rab escort protein (also called component A). Its function is as follows. Catalyzes the transfer of a geranylgeranyl moiety from geranylgeranyl diphosphate to both cysteines of Rab proteins with the C-terminal sequence -XXCC, -XCXC and -CCXX, such as RAB1A, RAB3A, RAB5A and RAB7A. The chain is Geranylgeranyl transferase type-2 subunit beta (RABGGTB) from Bos taurus (Bovine).